Here is a 357-residue protein sequence, read N- to C-terminus: MLLFAHLLQLLVSATVPTQSSPHSLRYFTTAVSRPGLGEPRFIIVGYVDDTQFVRFDSDAENPRMEPRARWIEQEGPEYWERETWKARDMGRNFRVNLRTLLGYYNQSNDESHTLQWMYGCDVGPDGRLLRGYCQEAYDGQDYISLNEDLRSWTANDIASQISKHKSEAVDEAHQQRAYLQGPCVEWLHRYLRLGNETLQRSDPPKAHVTHHPRSEDEVTLRCWALGFYPADITLTWQLNGEELTQDMELVETRPAGDGTFQKWAAVVVPLGKEQYYTCHVYHEGLPEPLTLRWEPPPSTVSNMVIIAVLVVLGAVIILGAVVAFVMKRRRHIGVKGCYAHVLGSKSFQTSDWPQKA.

The N-terminal stretch at 1–20 is a signal peptide; it reads MLLFAHLLQLLVSATVPTQS. The tract at residues 21 to 110 is alpha-1; it reads SPHSLRYFTT…LLGYYNQSND (90 aa). Residues 21–304 are Extracellular-facing; it reads SPHSLRYFTT…EPPPSTVSNM (284 aa). A glycan (N-linked (GlcNAc...) asparagine) is linked at Asn106. The segment at 111–202 is alpha-2; that stretch reads ESHTLQWMYG…RLGNETLQRS (92 aa). Cysteines 121 and 184 form a disulfide. Asn196 is a glycosylation site (N-linked (GlcNAc...) asparagine). An alpha-3 region spans residues 203–294; sequence DPPKAHVTHH…GLPEPLTLRW (92 aa). The Ig-like C1-type domain maps to 205–293; sequence PKAHVTHHPR…EGLPEPLTLR (89 aa). A disulfide bridge links Cys223 with Cys279. The segment at 295–304 is connecting peptide; it reads EPPPSTVSNM. The chain crosses the membrane as a helical span at residues 305 to 327; it reads VIIAVLVVLGAVIILGAVVAFVM. The Cytoplasmic segment spans residues 328–357; sequence KRRRHIGVKGCYAHVLGSKSFQTSDWPQKA. A Phosphoserine modification is found at Ser347.

Belongs to the MHC class I family. Heterodimer of an alpha chain and a beta chain (beta-2-microglobulin).

It is found in the membrane. Its function is as follows. Involved in the presentation of foreign antigens to the immune system. In Mus musculus (Mouse), this protein is H-2 class I histocompatibility antigen, D-37 alpha chain (H2-T23).